The sequence spans 66 residues: UPF0337 protein bsl1473 (66 aa).

Belongs to the UPF0337 (CsbD) family.

The polypeptide is UPF0337 protein bsl1473 (Bradyrhizobium diazoefficiens (strain JCM 10833 / BCRC 13528 / IAM 13628 / NBRC 14792 / USDA 110)).